The primary structure comprises 423 residues: Subtilisin-like protease 2 (423 aa).

A signal peptide spans 1–17 (MQLLNLGLLLLLPFVAG). Positions 18–123 (EIAPQPEPLR…VHPDQHVYLA (106 aa)) are excised as a propeptide. The 87-residue stretch at 37–123 (QYIVTLKEGL…VHPDQHVYLA (87 aa)) folds into the Inhibitor I9 domain. Residues 132–423 (RWGLGYMSSK…RKFTLPKNTK (292 aa)) form the Peptidase S8 domain. Residues D170 and H202 each act as charge relay system in the active site. N-linked (GlcNAc...) asparagine glycans are attached at residues N249, N262, and N349. The active-site Charge relay system is S358. N-linked (GlcNAc...) asparagine glycosylation occurs at N389.

This sequence belongs to the peptidase S8 family.

Its subcellular location is the secreted. In terms of biological role, secreted subtilisin-like serine protease with keratinolytic activity that contributes to pathogenicity. This chain is Subtilisin-like protease 2 (SUB2), found in Arthroderma otae (strain ATCC MYA-4605 / CBS 113480) (Microsporum canis).